Reading from the N-terminus, the 662-residue chain is Chromosomal replication initiator protein DnaA (662 aa).

The interval 1–93 (MDDEQNVLAT…QVEGLGVRIA (93 aa)) is domain I, interacts with DnaA modulators. Residues 93-322 (AAPATPTAER…STPAPANSSA (230 aa)) form a domain II region. Residues 96 to 105 (ATPTAERAAA) are compositionally biased toward low complexity. Positions 96–294 (ATPTAERAAA…SDGPVERDDE (199 aa)) are disordered. Residues 114–123 (SRPERPRGER) show a composition bias toward basic and acidic residues. Over residues 166–199 (PPAAEYTPAAEYTPAAEYTPAAEYSPEPEYTPAT) the composition is skewed to low complexity. Composition is skewed to basic and acidic residues over residues 236–248 (TPRRDGHGPRRDA) and 261–290 (PGDRPLRDTDRPLREPAAGHDVRESDGPVE). Residues 323–539 (SLNAKYTFET…GALIRVTAFA (217 aa)) form a domain III, AAA+ region region. Residues glycine 367, glycine 369, lysine 370, and threonine 371 each contribute to the ATP site. Positions 540 to 662 (SLNGQPLDLS…LTARIKQRSR (123 aa)) are domain IV, binds dsDNA.

It belongs to the DnaA family. In terms of assembly, oligomerizes as a right-handed, spiral filament on DNA at oriC.

Its subcellular location is the cytoplasm. Its function is as follows. Plays an essential role in the initiation and regulation of chromosomal replication. ATP-DnaA binds to the origin of replication (oriC) to initiate formation of the DNA replication initiation complex once per cell cycle. Binds the DnaA box (a 9 base pair repeat at the origin) and separates the double-stranded (ds)DNA. Forms a right-handed helical filament on oriC DNA; dsDNA binds to the exterior of the filament while single-stranded (ss)DNA is stabiized in the filament's interior. The ATP-DnaA-oriC complex binds and stabilizes one strand of the AT-rich DNA unwinding element (DUE), permitting loading of DNA polymerase. After initiation quickly degrades to an ADP-DnaA complex that is not apt for DNA replication. Binds acidic phospholipids. The sequence is that of Chromosomal replication initiator protein DnaA from Nocardia farcinica (strain IFM 10152).